The following is a 107-amino-acid chain: Nucleoid-associated protein Mmar10_0436 (107 aa).

This sequence belongs to the YbaB/EbfC family. In terms of assembly, homodimer.

The protein localises to the cytoplasm. Its subcellular location is the nucleoid. Its function is as follows. Binds to DNA and alters its conformation. May be involved in regulation of gene expression, nucleoid organization and DNA protection. This Maricaulis maris (strain MCS10) (Caulobacter maris) protein is Nucleoid-associated protein Mmar10_0436.